A 326-amino-acid polypeptide reads, in one-letter code: tRNA-dihydrouridine(20/20a) synthase (326 aa).

FMN is bound by residues P11–L13 and Q63. The Proton donor role is filled by C93. FMN-binding positions include K132, H165, N205–G207, and G227–R228.

It belongs to the Dus family. DusA subfamily. Requires FMN as cofactor.

It carries out the reaction 5,6-dihydrouridine(20) in tRNA + NADP(+) = uridine(20) in tRNA + NADPH + H(+). The catalysed reaction is 5,6-dihydrouridine(20) in tRNA + NAD(+) = uridine(20) in tRNA + NADH + H(+). The enzyme catalyses 5,6-dihydrouridine(20a) in tRNA + NADP(+) = uridine(20a) in tRNA + NADPH + H(+). It catalyses the reaction 5,6-dihydrouridine(20a) in tRNA + NAD(+) = uridine(20a) in tRNA + NADH + H(+). In terms of biological role, catalyzes the synthesis of 5,6-dihydrouridine (D), a modified base found in the D-loop of most tRNAs, via the reduction of the C5-C6 double bond in target uridines. Specifically modifies U20 and U20a in tRNAs. This chain is tRNA-dihydrouridine(20/20a) synthase, found in Vibrio parahaemolyticus serotype O3:K6 (strain RIMD 2210633).